The sequence spans 501 residues: MDLIFSLETWVLLAASLVLLYLYGTSTHGLFKKMGIPGPTPLPFIGTILEYRKGIWDFDIECRKKYGKMWGLFDGRQPLMVITDPDMIKTVLVKECYSVFTNRRSFGPVGFMKKAVSISEDEDWKRVRTLLSPTFTSGKLKEMLPIIAQYGDVLVKNLRQEAEKGKPVDLKEIFGAYSMDVITGTSFGVNIDSLRNPQDPFVKNVRRLLKFSFFDPLLLSITLFPFLTPIFEALHISMFPKDVMDFLKTSVEKIKDDRLKDKQKRRVDFLQLMINSQNSKEIDSHKALDDIEVVAQSIIILFAGYETTSSTLSFIMHLLATHPDVQQKLQEEIDTLLPNKELATYDTLVKMEYLDMVVNETLRLYPIAGRLERVCKKDVDINGTFIPKGTIVMMPTYALHRDPQHWTEPDEFRPERFSKKNKDNINPYIYHPFGAGPRNCLGMRFALMNIKLALVRLMQNFSFKLCKETQVPLKLGKQGLLQPEKPIVLKVVSRDGIIRGA.

C440 is a heme binding site.

Belongs to the cytochrome P450 family. It depends on heme as a cofactor.

The protein localises to the endoplasmic reticulum membrane. Its subcellular location is the microsome membrane. It catalyses the reaction an organic molecule + reduced [NADPH--hemoprotein reductase] + O2 = an alcohol + oxidized [NADPH--hemoprotein reductase] + H2O + H(+). Its function is as follows. Exhibits progesterone 6 beta-hydroxylase activity. This is Cytochrome P450 3A6 (CYP3A6) from Oryctolagus cuniculus (Rabbit).